The following is a 165-amino-acid chain: 6,7-dimethyl-8-ribityllumazine synthase (165 aa).

5-amino-6-(D-ribitylamino)uracil-binding positions include F22, 56–58 (SME), and 80–82 (AVI). A (2S)-2-hydroxy-3-oxobutyl phosphate-binding site is contributed by 85 to 86 (ET). H88 (proton donor) is an active-site residue. F113 lines the 5-amino-6-(D-ribitylamino)uracil pocket. R127 is a (2S)-2-hydroxy-3-oxobutyl phosphate binding site.

The protein belongs to the DMRL synthase family.

It catalyses the reaction (2S)-2-hydroxy-3-oxobutyl phosphate + 5-amino-6-(D-ribitylamino)uracil = 6,7-dimethyl-8-(1-D-ribityl)lumazine + phosphate + 2 H2O + H(+). Its pathway is cofactor biosynthesis; riboflavin biosynthesis; riboflavin from 2-hydroxy-3-oxobutyl phosphate and 5-amino-6-(D-ribitylamino)uracil: step 1/2. Functionally, catalyzes the formation of 6,7-dimethyl-8-ribityllumazine by condensation of 5-amino-6-(D-ribitylamino)uracil with 3,4-dihydroxy-2-butanone 4-phosphate. This is the penultimate step in the biosynthesis of riboflavin. The chain is 6,7-dimethyl-8-ribityllumazine synthase from Thermotoga petrophila (strain ATCC BAA-488 / DSM 13995 / JCM 10881 / RKU-1).